We begin with the raw amino-acid sequence, 954 residues long: Glycine dehydrogenase (decarboxylating) (954 aa).

The residue at position 706 (lysine 706) is an N6-(pyridoxal phosphate)lysine.

The protein belongs to the GcvP family. In terms of assembly, the glycine cleavage system is composed of four proteins: P, T, L and H. It depends on pyridoxal 5'-phosphate as a cofactor.

The enzyme catalyses N(6)-[(R)-lipoyl]-L-lysyl-[glycine-cleavage complex H protein] + glycine + H(+) = N(6)-[(R)-S(8)-aminomethyldihydrolipoyl]-L-lysyl-[glycine-cleavage complex H protein] + CO2. Its function is as follows. The glycine cleavage system catalyzes the degradation of glycine. The P protein binds the alpha-amino group of glycine through its pyridoxal phosphate cofactor; CO(2) is released and the remaining methylamine moiety is then transferred to the lipoamide cofactor of the H protein. This is Glycine dehydrogenase (decarboxylating) from Pseudomonas syringae pv. tomato (strain ATCC BAA-871 / DC3000).